The sequence spans 182 residues: Adenine phosphoribosyltransferase (182 aa).

It belongs to the purine/pyrimidine phosphoribosyltransferase family. In terms of assembly, homodimer.

It localises to the cytoplasm. The catalysed reaction is AMP + diphosphate = 5-phospho-alpha-D-ribose 1-diphosphate + adenine. The protein operates within purine metabolism; AMP biosynthesis via salvage pathway; AMP from adenine: step 1/1. In terms of biological role, catalyzes a salvage reaction resulting in the formation of AMP, that is energically less costly than de novo synthesis. The chain is Adenine phosphoribosyltransferase from Pseudomonas putida (strain GB-1).